A 376-amino-acid polypeptide reads, in one-letter code: Glutamate 5-kinase (376 aa).

ATP is bound at residue K23. Residues S63, D150, and N162 each coordinate substrate. Residues 182-183 (SD) and 222-228 (TGGMASK) contribute to the ATP site. The PUA domain maps to 284–358 (GGALRIDAGA…GKQTAQLPEG (75 aa)).

It belongs to the glutamate 5-kinase family.

It localises to the cytoplasm. It carries out the reaction L-glutamate + ATP = L-glutamyl 5-phosphate + ADP. It functions in the pathway amino-acid biosynthesis; L-proline biosynthesis; L-glutamate 5-semialdehyde from L-glutamate: step 1/2. Functionally, catalyzes the transfer of a phosphate group to glutamate to form L-glutamate 5-phosphate. In Corynebacterium diphtheriae (strain ATCC 700971 / NCTC 13129 / Biotype gravis), this protein is Glutamate 5-kinase.